The sequence spans 546 residues: Glucose-6-phosphate isomerase (546 aa).

Residue Glu357 is the Proton donor of the active site. Catalysis depends on residues His389 and Lys509.

The protein belongs to the GPI family.

It is found in the cytoplasm. It carries out the reaction alpha-D-glucose 6-phosphate = beta-D-fructose 6-phosphate. It participates in carbohydrate biosynthesis; gluconeogenesis. The protein operates within carbohydrate degradation; glycolysis; D-glyceraldehyde 3-phosphate and glycerone phosphate from D-glucose: step 2/4. Its function is as follows. Catalyzes the reversible isomerization of glucose-6-phosphate to fructose-6-phosphate. The polypeptide is Glucose-6-phosphate isomerase (Anaeromyxobacter dehalogenans (strain 2CP-1 / ATCC BAA-258)).